Reading from the N-terminus, the 278-residue chain is Octanoyl-[GcvH]:protein N-octanoyltransferase (278 aa).

A BPL/LPL catalytic domain is found at 44 to 249 (SQSPPTLRAW…TLQQHGASLL (206 aa)). Cys-148 acts as the Acyl-thioester intermediate in catalysis.

Belongs to the octanoyltransferase LipL family.

The catalysed reaction is N(6)-octanoyl-L-lysyl-[glycine-cleavage complex H protein] + L-lysyl-[lipoyl-carrier protein] = N(6)-octanoyl-L-lysyl-[lipoyl-carrier protein] + L-lysyl-[glycine-cleavage complex H protein]. It participates in protein modification; protein lipoylation via endogenous pathway; protein N(6)-(lipoyl)lysine from octanoyl-[acyl-carrier-protein]. Catalyzes the amidotransfer (transamidation) of the octanoyl moiety from octanoyl-GcvH to the lipoyl domain of the E2 subunit of lipoate-dependent enzymes. In Halalkalibacterium halodurans (strain ATCC BAA-125 / DSM 18197 / FERM 7344 / JCM 9153 / C-125) (Bacillus halodurans), this protein is Octanoyl-[GcvH]:protein N-octanoyltransferase.